The sequence spans 325 residues: Brorin (325 aa).

Positions 1 to 27 (MPSSTAMAVGALSSSLLVTCCLMVALC) are cleaved as a signal peptide. A disordered region spans residues 37–121 (AQAPEQPGQE…RPRGDTPQAE (85 aa)). 2 stretches are compositionally biased toward basic and acidic residues: residues 44–56 (GQEK…RDGP) and 64–78 (RPAR…DWKS). A Mediates cell adhesion motif is present at residues 114 to 116 (RGD). VWFC domains are found at residues 153–212 (KGCV…PQCK) and 216–274 (NYCE…PICK).

As to quaternary structure, peripherally associated with AMPAR complex. AMPAR complex consists of an inner core made of 4 pore-forming GluA/GRIA proteins (GRIA1, GRIA2, GRIA3 and GRIA4) and 4 major auxiliary subunits arranged in a twofold symmetry. One of the two pairs of distinct binding sites is occupied either by CNIH2, CNIH3 or CACNG2, CACNG3. The other harbors CACNG2, CACNG3, CACNG4, CACNG8 or GSG1L. This inner core of AMPAR complex is complemented by outer core constituents binding directly to the GluA/GRIA proteins at sites distinct from the interaction sites of the inner core constituents. Outer core constituents include at least PRRT1, PRRT2, CKAMP44/SHISA9, FRRS1L and NRN1. The proteins of the inner and outer core serve as a platform for other, more peripherally associated AMPAR constituents, including VWC2. Alone or in combination, these auxiliary subunits control the gating and pharmacology of the AMPAR complex and profoundly impact their biogenesis and protein processing.

It is found in the secreted. The protein resides in the extracellular space. Its subcellular location is the extracellular matrix. The protein localises to the basement membrane. It localises to the synapse. Its function is as follows. BMP antagonist which may play a role in neural development. Promotes cell adhesion. The protein is Brorin (VWC2) of Homo sapiens (Human).